A 346-amino-acid polypeptide reads, in one-letter code: NADPH dehydrogenase (346 aa).

23–26 (SPMC) is a binding site for FMN. Tyrosine 28 contributes to the substrate binding site. 2 residues coordinate FMN: alanine 60 and glutamine 102. A substrate-binding site is contributed by 164 to 167 (HGAH). FMN-binding positions include arginine 215 and 307–308 (GR).

It belongs to the NADH:flavin oxidoreductase/NADH oxidase family. NamA subfamily. Homotetramer. FMN serves as cofactor.

It carries out the reaction A + NADPH + H(+) = AH2 + NADP(+). Catalyzes the reduction of the double bond of an array of alpha,beta-unsaturated aldehydes and ketones. It also reduces the nitro group of nitroester and nitroaromatic compounds. It could have a role in detoxification processes. In Bacillus cytotoxicus (strain DSM 22905 / CIP 110041 / 391-98 / NVH 391-98), this protein is NADPH dehydrogenase.